A 548-amino-acid chain; its full sequence is Frizzled-7 (548 aa).

An N-terminal signal peptide occupies residues M1–A19. Over Q20–W230 the chain is Extracellular. An FZ domain is found at P31 to Q150. 5 disulfides stabilise this stretch: C36–C97, C44–C90, C81–C118, C107–C147, and C111–C135. A glycan (N-linked (GlcNAc...) asparagine) is linked at N50. N-linked (GlcNAc...) asparagine glycosylation occurs at N151. A helical membrane pass occupies residues V231–V251. Residues D252–P262 are Cytoplasmic-facing. Residues I263–L283 form a helical membrane-spanning segment. The Extracellular segment spans residues E284–C310. The helical transmembrane segment at T311–L331 threads the bilayer. The Cytoplasmic segment spans residues S332 to Q353. The helical transmembrane segment at Y354–G374 threads the bilayer. At Q375 to G397 the chain is on the extracellular side. A helical membrane pass occupies residues F398–F418. The Cytoplasmic portion of the chain corresponds to V419 to R444. A helical transmembrane segment spans residues I445 to Y465. Topologically, residues E466–T502 are extracellular. A helical transmembrane segment spans residues V503–W523. Over S524–V548 the chain is Cytoplasmic. The Lys-Thr-X-X-X-Trp motif, mediates interaction with the PDZ domain of Dvl family members motif lies at K526–W531. The PDZ-binding motif lies at T546–V548.

Belongs to the G-protein coupled receptor Fz/Smo family. As to quaternary structure, interacts with wnt11 and sdc4. The extracellular domain interacts with the extracellular domain of pcdh8/papc.

It localises to the cell membrane. The protein localises to the endosome membrane. Functionally, receptor for Wnt proteins. Acts in both canonical and non-canonical Wnt pathways. Although different papers report differing Wnt preferences, wnt5a, wnt8b and wnt11 have been proposed as synergists. In the canonical Wnt pathway, acts via beta-catenin to promote the expression of the dorsal genes siamois, twin and nodal3 and to establish the dorsal axis of the embryo and induce dorsal mesoderm formation. In a non-canonical Wnt/planar cell polarity (PCP) pathway, acts with sdc4 and dvl2/dsh to regulate convergent extension movements in gastrulation. Triggers phosphorylation of dvl2/dsh and its translocation to the plasma membrane. In a third branch of Wnt signaling, acts in a non-canonical pathway via trimeric G proteins, and independently of dvl2/dsh, to recruit protein kinase C (PKC) to the membrane and thus activate PKC. PKC signaling controls cell sorting and tissue separation during gastrulation. This chain is Frizzled-7, found in Xenopus tropicalis (Western clawed frog).